We begin with the raw amino-acid sequence, 266 residues long: Integral membrane protein 2B (266 aa).

The Cytoplasmic portion of the chain corresponds to 1–54 (MVKVTFNSALAQKEAKKDESKSGEEALIIPPDAVAVDCKDPDEVVPVGQRRAWC). A helical; Signal-anchor for type II membrane protein transmembrane segment spans residues 55–75 (WCMCFGLAFMLAGVILGGAYL). Residues 76–266 (YKYFAFQPDD…RFAVETLICP (191 aa)) lie on the Lumenal side of the membrane. The necessary for interaction with APP and inhibitor effects on APP processing stretch occupies residues 102-134 (EPSADAPASRYQTIEENIKIFEEDEVEFISVPV). The BRICHOS domain maps to 137–231 (FADSDPANIV…LCHDKETYKL (95 aa)). Cystine bridges form between Cys164–Cys223 and Cys248–Cys265. N-linked (GlcNAc...) asparagine glycosylation is present at Asn170.

The protein belongs to the ITM2 family. Homodimer; disulfide-linked. Interacts with SPPL2A and SPPL2B. Interacts with APP. Mature BRI2 (mBRI2) interacts with the APP amyloid-beta A4 protein; the interaction occurs at the cell surface and in the endocytic compartments and enable alpha- and beta-secretase-induced APP cleavage inhibition. Mature BRI2 (mBRI2) interacts with the APP C99; the interaction occurs in the endocytic compartments and enable gamma-secretase-induced C99 cleavage inhibition. May form heterodimers with Bri23 peptide and APP amyloid-beta protein 40. Interacts with ADAM7 in sperm; the interaction increases following capacitation. In terms of processing, the ectodomain C-terminal part of the imBRI2 is processed by furin producing a secreted Bri23 peptide and a mature BRI2, membrane form (mBRI2). The remaining part of the ectodomain of mBRI2 containing the BRICHOS domain is cleaved by ADAM10 and is secreted (BRI2C, soluble form). The membrane-bound N-terminal fragment (BRI2C, membrane form) is further proteolytically processed by SPPL2A and SPPL2B through regulated intramembrane proteolysis producing a secreted C-peptide and a BRI2 intracellular domain (BRI2 ICD) released in the cytosol. Shedding by ADAM10 facilitates intramembrane cleavage but is not absolutely required for BRI2 ICD generation. Post-translationally, glycosylation at Asn-170 is important for cell surface localization, but doesn't affect furin- and ADAM10-induced proteolytic processing.

It localises to the golgi apparatus membrane. The protein resides in the cell membrane. The protein localises to the endosome membrane. It is found in the secreted. Its function is as follows. Plays a regulatory role in the processing of the amyloid-beta A4 precursor protein (APP) and acts as an inhibitor of the amyloid-beta peptide aggregation and fibrils deposition. Plays a role in the induction of neurite outgrowth. Functions as a protease inhibitor by blocking access of secretases to APP cleavage sites. Functionally, mature BRI2 (mBRI2) functions as a modulator of the amyloid-beta A4 precursor protein (APP) processing leading to a strong reduction in the secretion of secretase-processed amyloid-beta protein 40 and amyloid-beta protein 42. In terms of biological role, bri23 peptide prevents aggregation of APP amyloid-beta protein 42 into toxic oligomers. The polypeptide is Integral membrane protein 2B (ITM2B) (Bos taurus (Bovine)).